The primary structure comprises 481 residues: Serine--tRNA ligase (481 aa).

Residue 284–286 coordinates L-serine; sequence TAE. 315-317 provides a ligand contact to ATP; the sequence is RAE. An L-serine-binding site is contributed by Glu338. Position 405–408 (405–408) interacts with ATP; that stretch reads EISS. Position 440 (Ser440) interacts with L-serine.

Belongs to the class-II aminoacyl-tRNA synthetase family. Type-1 seryl-tRNA synthetase subfamily. In terms of assembly, homodimer. The tRNA molecule binds across the dimer.

Its subcellular location is the cytoplasm. It carries out the reaction tRNA(Ser) + L-serine + ATP = L-seryl-tRNA(Ser) + AMP + diphosphate + H(+). It catalyses the reaction tRNA(Sec) + L-serine + ATP = L-seryl-tRNA(Sec) + AMP + diphosphate + H(+). It participates in aminoacyl-tRNA biosynthesis; selenocysteinyl-tRNA(Sec) biosynthesis; L-seryl-tRNA(Sec) from L-serine and tRNA(Sec): step 1/1. Its function is as follows. Catalyzes the attachment of serine to tRNA(Ser). Is also able to aminoacylate tRNA(Sec) with serine, to form the misacylated tRNA L-seryl-tRNA(Sec), which will be further converted into selenocysteinyl-tRNA(Sec). This Rhodopseudomonas palustris (strain BisB18) protein is Serine--tRNA ligase.